We begin with the raw amino-acid sequence, 75 residues long: Exodeoxyribonuclease 7 small subunit (75 aa).

Belongs to the XseB family. In terms of assembly, heterooligomer composed of large and small subunits.

Its subcellular location is the cytoplasm. The enzyme catalyses Exonucleolytic cleavage in either 5'- to 3'- or 3'- to 5'-direction to yield nucleoside 5'-phosphates.. Its function is as follows. Bidirectionally degrades single-stranded DNA into large acid-insoluble oligonucleotides, which are then degraded further into small acid-soluble oligonucleotides. In Listeria innocua serovar 6a (strain ATCC BAA-680 / CLIP 11262), this protein is Exodeoxyribonuclease 7 small subunit.